Reading from the N-terminus, the 343-residue chain is Dihydroorotase (343 aa).

The Zn(2+) site is built by histidine 14 and histidine 16. Substrate contacts are provided by residues 16–18 and asparagine 42; that span reads HLR. 3 residues coordinate Zn(2+): lysine 100, histidine 137, and histidine 175. Residue lysine 100 is modified to N6-carboxylysine. Residue histidine 137 participates in substrate binding. Leucine 220 contributes to the substrate binding site. Position 248 (aspartate 248) interacts with Zn(2+). Residue aspartate 248 is part of the active site. Residues histidine 252 and alanine 264 each coordinate substrate.

The protein belongs to the metallo-dependent hydrolases superfamily. DHOase family. Class II DHOase subfamily. Homodimer. Zn(2+) is required as a cofactor.

It carries out the reaction (S)-dihydroorotate + H2O = N-carbamoyl-L-aspartate + H(+). It participates in pyrimidine metabolism; UMP biosynthesis via de novo pathway; (S)-dihydroorotate from bicarbonate: step 3/3. Functionally, catalyzes the reversible cyclization of carbamoyl aspartate to dihydroorotate. This Synechococcus sp. (strain CC9902) protein is Dihydroorotase.